The following is a 40-amino-acid chain: Meleagrin (40 aa).

Pyrrolidone carboxylic acid is present on Q1. 3 cysteine pairs are disulfide-bonded: C6–C33, C12–C28, and C16–C32.

It belongs to the transferrin family.

In Meleagris gallopavo (Wild turkey), this protein is Meleagrin.